The primary structure comprises 215 residues: N-(5'-phosphoribosyl)anthranilate isomerase (215 aa).

This sequence belongs to the TrpF family.

It carries out the reaction N-(5-phospho-beta-D-ribosyl)anthranilate = 1-(2-carboxyphenylamino)-1-deoxy-D-ribulose 5-phosphate. It participates in amino-acid biosynthesis; L-tryptophan biosynthesis; L-tryptophan from chorismate: step 3/5. This chain is N-(5'-phosphoribosyl)anthranilate isomerase, found in Paramagnetospirillum magneticum (strain ATCC 700264 / AMB-1) (Magnetospirillum magneticum).